The chain runs to 549 residues: MKNINPTHTQAWKSLEAHKAELSNTTIQDLFKQEKNRFDDYSLTFNNQILVDFSKNNINQTTLSHLRQLAQECALDSAKEAMFTGEKINRTENRAVLHTALRNRTNTPVLVDGKDVMPEVNAVLAKMKDFCQRIISGEWKGYTGKAITDVVNIGIGGSDLGPYMVTEALRPYKNHLNMHFVSNVDGTHIAETLKKVNPETTLFLVASKTFTTQETMTNAQSARDWLLKAAKDESAVAKHFAALSTNAKDVEKFGIDTNNMFEFWDWVGGRYSLWSAIGLSIALSIGFENFEALLNGAHEMDKHFRTTPIEKNIPTTLALVGLWNTNFLGAQTEAILPYDQYLHRFAAYFQQGNMESNGKYVDRDGNVINNYQTGPIIWGEPGTNGQHAFYQLIHQGTTLIPCDFIAPAQSHNPLADHHNKLLSNFFAQTEALAFGKTKEEVEAEFVKAGKSLDDVKNIVPFKVFTGNKPTNSILVQKITPFTLGALIAMYEHKIFVQGVIFNIFSFDQWGVELGKQLANRILPELTDSEKVASHDSSTNGLINQFKAWR.

E355 functions as the Proton donor in the catalytic mechanism. Residues H387 and K515 contribute to the active site.

This sequence belongs to the GPI family.

It is found in the cytoplasm. The catalysed reaction is alpha-D-glucose 6-phosphate = beta-D-fructose 6-phosphate. It participates in carbohydrate biosynthesis; gluconeogenesis. It functions in the pathway carbohydrate degradation; glycolysis; D-glyceraldehyde 3-phosphate and glycerone phosphate from D-glucose: step 2/4. Functionally, catalyzes the reversible isomerization of glucose-6-phosphate to fructose-6-phosphate. This is Glucose-6-phosphate isomerase from Haemophilus influenzae (strain 86-028NP).